We begin with the raw amino-acid sequence, 186 residues long: Threonylcarbamoyl-AMP synthase (186 aa).

In terms of domain architecture, YrdC-like spans 5 to 186 (TQSINDAVKC…DAITGEILRL (182 aa)).

It belongs to the SUA5 family. TsaC subfamily.

It is found in the cytoplasm. The enzyme catalyses L-threonine + hydrogencarbonate + ATP = L-threonylcarbamoyladenylate + diphosphate + H2O. Its function is as follows. Required for the formation of a threonylcarbamoyl group on adenosine at position 37 (t(6)A37) in tRNAs that read codons beginning with adenine. Catalyzes the conversion of L-threonine, HCO(3)(-)/CO(2) and ATP to give threonylcarbamoyl-AMP (TC-AMP) as the acyladenylate intermediate, with the release of diphosphate. This chain is Threonylcarbamoyl-AMP synthase, found in Coxiella burnetii (strain RSA 493 / Nine Mile phase I).